Reading from the N-terminus, the 122-residue chain is Small ribosomal subunit protein uS13 (122 aa).

The disordered stretch occupies residues Arg99–Lys122.

The protein belongs to the universal ribosomal protein uS13 family. As to quaternary structure, part of the 30S ribosomal subunit. Forms a loose heterodimer with protein S19. Forms two bridges to the 50S subunit in the 70S ribosome.

In terms of biological role, located at the top of the head of the 30S subunit, it contacts several helices of the 16S rRNA. In the 70S ribosome it contacts the 23S rRNA (bridge B1a) and protein L5 of the 50S subunit (bridge B1b), connecting the 2 subunits; these bridges are implicated in subunit movement. Contacts the tRNAs in the A and P-sites. The sequence is that of Small ribosomal subunit protein uS13 from Parvibaculum lavamentivorans (strain DS-1 / DSM 13023 / NCIMB 13966).